The primary structure comprises 468 residues: MNNQPSFRARVQKFGSFLSGMIMPNIGAFIAWGLITALFIPTGWWPNEQLAELVGPMITYLLPLLIGYTGGKMIYDVRGGVVGAAATMGVVVGADIPMFIGAMIMGPLGGFLIKKVDQVLQPKVRSGFEMLVNNFSAGILAAILAIVAFLGIGPVVVSFSNVLASGVEVIIGAGLLPLASIFIEPAKVLFLNNAINHGILSPIGIDQAASAGKSILFLLETNPGPGLGVLLAFMVFGKGMAKQSAPGAAVIHFAGGIHEIYFPYILMKPTLILAVIAGGMSGVFTFVLFNAGLVAVPSPGSIFALLAMTPRGEYAGVLAGVIIATVVSFVIASIILKTSKATAEDLTEATSKMEGLKGKESSVKEALITDDEQPQATEVNKIIFACDAGMGSSAMGASILRDKVKKAGLSIEVANTSINQLPDDVDIIITHKDLTDRAKAKNPHAEHISVENFLSSPKYDELVNRLKS.

At 1–25 (MNNQPSFRARVQKFGSFLSGMIMPN) the chain is on the cytoplasmic side. Positions 14–344 (FGSFLSGMIM…ILKTSKATAE (331 aa)) constitute a PTS EIIC type-2 domain. A helical transmembrane segment spans residues 26–47 (IGAFIAWGLITALFIPTGWWPN). Residues 48–51 (EQLA) are Extracellular-facing. A helical membrane pass occupies residues 52-72 (ELVGPMITYLLPLLIGYTGGK). Residues 73–135 (MIYDVRGGVV…SGFEMLVNNF (63 aa)) lie on the Cytoplasmic side of the membrane. A helical transmembrane segment spans residues 136 to 157 (SAGILAAILAIVAFLGIGPVVV). The Extracellular portion of the chain corresponds to 158-166 (SFSNVLASG). A helical membrane pass occupies residues 167–187 (VEVIIGAGLLPLASIFIEPAK). At 188–274 (VLFLNNAINH…ILMKPTLILA (87 aa)) the chain is on the cytoplasmic side. A helical transmembrane segment spans residues 275 to 294 (VIAGGMSGVFTFVLFNAGLV). Over 295-314 (AVPSPGSIFALLAMTPRGEY) the chain is Extracellular. Residues 315–336 (AGVLAGVIIATVVSFVIASIIL) traverse the membrane as a helical segment. The Cytoplasmic portion of the chain corresponds to 337 to 468 (KTSKATAEDL…YDELVNRLKS (132 aa)). The region spanning 380–468 (NKIIFACDAG…YDELVNRLKS (89 aa)) is the PTS EIIB type-2 domain. Cys386 (phosphocysteine intermediate; for EIIB activity) is an active-site residue. Position 386 is a phosphocysteine; by EIIA (Cys386).

As to quaternary structure, homodimer.

Its subcellular location is the cell membrane. It catalyses the reaction D-mannitol(out) + N(pros)-phospho-L-histidyl-[protein] = D-mannitol 1-phosphate(in) + L-histidyl-[protein]. The phosphoenolpyruvate-dependent sugar phosphotransferase system (sugar PTS), a major carbohydrate active transport system, catalyzes the phosphorylation of incoming sugar substrates concomitantly with their translocation across the cell membrane. The enzyme II CmtAB PTS system is involved in D-mannitol transport. This chain is PTS system mannitol-specific EIICB component (mtlA), found in Halalkalibacterium halodurans (strain ATCC BAA-125 / DSM 18197 / FERM 7344 / JCM 9153 / C-125) (Bacillus halodurans).